Reading from the N-terminus, the 198-residue chain is Transmembrane gamma-carboxyglutamic acid protein 2 (198 aa).

The first 17 residues, 1–17 (MRGRPSLLLVYMGLATC), serve as a signal peptide directing secretion. Positions 18–51 (LDTSPHREQNQVLDIFLDAPEAQSFLVGRRRFPR) are excised as a propeptide. Positions 52–98 (ANHWDLELLTPGNLERECLEERCSWEEAREYFEDNTLTERFWESYTY) constitute a Gla domain. Over 52 to 111 (ANHWDLELLTPGNLERECLEERCSWEEAREYFEDNTLTERFWESYTYNGKGGRGRVDVAG) the chain is Extracellular. A disulfide bond links cysteine 69 and cysteine 74. The residue at position 72 (glutamate 72) is a 4-carboxyglutamate. A helical membrane pass occupies residues 112 to 132 (LAVGLTSGILLIVLAGLGAFW). Topologically, residues 133-198 (YLHYRRRRLR…PPYSSLRRPH (66 aa)) are cytoplasmic. Positions 156 to 198 (PLSPQTPQSPPLPPGLPTYEQALAASGVHDAPPPPYSSLRRPH) are disordered. Over residues 162–171 (PQSPPLPPGL) the composition is skewed to pro residues. The LPXY motif; mediates binding to WW domain-containing proteins motif lies at 171–174 (LPTY). The PPXY motif; mediates binding to WW domain-containing proteins signature appears at 188-191 (PPPY).

Interacts with NEDD4. Interacts with transcriptional coactivator YAP1. Gamma-carboxyglutamate residues are formed by vitamin K dependent carboxylation. These residues are essential for the binding of calcium.

The protein localises to the cell membrane. The chain is Transmembrane gamma-carboxyglutamic acid protein 2 (Prrg2) from Mus musculus (Mouse).